Reading from the N-terminus, the 373-residue chain is Alanine racemase (373 aa).

Lys-37 serves as the catalytic Proton acceptor; specific for D-alanine. Residue Lys-37 is modified to N6-(pyridoxal phosphate)lysine. Arg-135 is a substrate binding site. Catalysis depends on Tyr-266, which acts as the Proton acceptor; specific for L-alanine. Met-313 lines the substrate pocket.

This sequence belongs to the alanine racemase family. The cofactor is pyridoxal 5'-phosphate.

It carries out the reaction L-alanine = D-alanine. It participates in amino-acid biosynthesis; D-alanine biosynthesis; D-alanine from L-alanine: step 1/1. Its function is as follows. Catalyzes the interconversion of L-alanine and D-alanine. This organism is able to use both L- and D-alanine as a nitrogen source. May also prevent D-alanine from interfering with the use of L-alanine. The sequence is that of Alanine racemase (alr) from Methanococcus maripaludis (strain DSM 14266 / JCM 13030 / NBRC 101832 / S2 / LL).